A 292-amino-acid chain; its full sequence is tRNA-splicing endonuclease (292 aa).

Active-site residues include tyrosine 231, histidine 238, and lysine 267.

The protein belongs to the tRNA-intron endonuclease family. Archaeal long subfamily. Homodimer.

It catalyses the reaction pretRNA = a 3'-half-tRNA molecule with a 5'-OH end + a 5'-half-tRNA molecule with a 2',3'-cyclic phosphate end + an intron with a 2',3'-cyclic phosphate and a 5'-hydroxyl terminus.. Functionally, endonuclease that removes tRNA introns. Cleaves pre-tRNA at the 5'- and 3'-splice sites to release the intron. The products are an intron and two tRNA half-molecules bearing 2',3' cyclic phosphate and 5'-OH termini. Recognizes a pseudosymmetric substrate in which 2 bulged loops of 3 bases are separated by a stem of 4 bp. This is tRNA-splicing endonuclease from Thermoplasma volcanium (strain ATCC 51530 / DSM 4299 / JCM 9571 / NBRC 15438 / GSS1).